Here is a 334-residue protein sequence, read N- to C-terminus: Non-functional pseudokinase ZED1 (334 aa).

In terms of domain architecture, Protein kinase spans 49–334 (FSESRIISSW…KELKLIEKLS (286 aa)). Residues 55–63 (ISSWGYFIW) and Lys76 contribute to the ATP site. Thr125 and Thr177 each carry O-acetylthreonine.

This sequence belongs to the protein kinase superfamily. Ser/Thr protein kinase family. ZRK subfamily. As to quaternary structure, interacts with RPP13L4/ZAR1. Component of an immune signaling complex made of, at least, SZE1, BKN2/SZE2, ZAR1 and ZED1. Binds directly to SZE1 at the plasma membrane. Expressed in seedlings, young leaves, floral organs, shoot apical meristems (SAM) and inflorescence stems.

The protein resides in the cytoplasm. The protein localises to the cytosol. It is found in the nucleus. Its subcellular location is the cell membrane. Its function is as follows. Together with RPP13L4/ZAR1, involved in the ambient temperature (above 22 degrees Celsius)-sensitive aerial organ development. Together with RPP13L4/ZAR1, involved in the regulation of the ambient temperature-sensitive intersection of growth and immune response in the absence of pathogens, by repressing the transcription of SNC1. Probable non-functional kinase required for recognition of the Pseudomonas syringae type III effector HopZ1a by RPP13L4/ZAR1 and, together with SZE1 and SZE2, to trigger subsequent defense responses. May function as a decoy to trap HopZ1a in the ZAR1 complex for recognition by the plant immune system. The chain is Non-functional pseudokinase ZED1 from Arabidopsis thaliana (Mouse-ear cress).